Here is a 637-residue protein sequence, read N- to C-terminus: Zinc-transporting ATPase (637 aa).

Transmembrane regions (helical) follow at residues 43–63, 89–109, 258–278, and 286–306; these read GWLLSGYQVLSIILFLLAFVI, IFAAIGSALIGYWAEGAILIF, GVLIAVALLLFVPHFALGWSW, and MVFMVVASPCALVASIMPAAL. The active-site 4-aspartylphosphate intermediate is the Asp-337. Positions 535 and 539 each coordinate Mg(2+). The helical transmembrane segment at 599–619 threads the bilayer; the sequence is VICLLICANFLQAMELPFGVI.

The protein belongs to the cation transport ATPase (P-type) (TC 3.A.3) family. Type IB subfamily.

Its subcellular location is the cell membrane. It catalyses the reaction Zn(2+)(out) + ATP(in) + H2O(in) = Zn(2+)(in) + ADP(in) + phosphate(in) + H(+)(in). Its function is as follows. Couples the hydrolysis of ATP with the transport of zinc into the cell. Plays an important role in protecting cells against oxidative stress. ZosA-mediated zinc transport is required for post-transcriptional control of comK and competence development. This Bacillus subtilis (strain 168) protein is Zinc-transporting ATPase (zosA).